Consider the following 386-residue polypeptide: Heat-inducible transcription repressor HrcA (386 aa).

This sequence belongs to the HrcA family.

Negative regulator of class I heat shock genes (grpE-dnaK-dnaJ and groELS operons). Prevents heat-shock induction of these operons. This Chlamydia caviae (strain ATCC VR-813 / DSM 19441 / 03DC25 / GPIC) (Chlamydophila caviae) protein is Heat-inducible transcription repressor HrcA.